The following is a 145-amino-acid chain: MRQTFMANESNIERKWYVIDAEGQTLGRLSSEVASILRGKNKVTYTPHVDTGDYVIVINASKIEFTGNKETDKVYYRHSNHPGGIKSITAGELRRTNPERLIENSIKGMLPSTRLGEKQGKKLFVYGGAEHPHAAQQPENYELRG.

This sequence belongs to the universal ribosomal protein uL13 family. Part of the 50S ribosomal subunit.

In terms of biological role, this protein is one of the early assembly proteins of the 50S ribosomal subunit, although it is not seen to bind rRNA by itself. It is important during the early stages of 50S assembly. The polypeptide is Large ribosomal subunit protein uL13 (Staphylococcus aureus (strain Mu3 / ATCC 700698)).